Here is a 351-residue protein sequence, read N- to C-terminus: Phosphoribosylformylglycinamidine cyclo-ligase (351 aa).

The protein belongs to the AIR synthase family.

It is found in the cytoplasm. It carries out the reaction 2-formamido-N(1)-(5-O-phospho-beta-D-ribosyl)acetamidine + ATP = 5-amino-1-(5-phospho-beta-D-ribosyl)imidazole + ADP + phosphate + H(+). It participates in purine metabolism; IMP biosynthesis via de novo pathway; 5-amino-1-(5-phospho-D-ribosyl)imidazole from N(2)-formyl-N(1)-(5-phospho-D-ribosyl)glycinamide: step 2/2. This is Phosphoribosylformylglycinamidine cyclo-ligase from Burkholderia lata (strain ATCC 17760 / DSM 23089 / LMG 22485 / NCIMB 9086 / R18194 / 383).